A 453-amino-acid chain; its full sequence is Bifunctional protein GlmU (453 aa).

Residues 1 to 227 (MNKLSVVILA…LMEVEGVNNR (227 aa)) are pyrophosphorylase. Residues 9–12 (LAAG), Lys23, Gln74, 79–80 (GT), 101–103 (YGD), Gly138, Glu152, Asn167, and Asn225 contribute to the UDP-N-acetyl-alpha-D-glucosamine site. Position 103 (Asp103) interacts with Mg(2+). Asn225 lines the Mg(2+) pocket. The segment at 228–248 (LQLANLERHFQRKQVEKLLLA) is linker. Residues 249–453 (GVTFADPARF…ISNWQRPKRK (205 aa)) are N-acetyltransferase. The UDP-N-acetyl-alpha-D-glucosamine site is built by Arg331 and Lys349. His361 functions as the Proton acceptor in the catalytic mechanism. Tyr364 and Asn375 together coordinate UDP-N-acetyl-alpha-D-glucosamine. Acetyl-CoA contacts are provided by residues Ala378, 384–385 (NY), Ser403, Ala421, and Arg438.

The protein in the N-terminal section; belongs to the N-acetylglucosamine-1-phosphate uridyltransferase family. In the C-terminal section; belongs to the transferase hexapeptide repeat family. In terms of assembly, homotrimer. The cofactor is Mg(2+).

Its subcellular location is the cytoplasm. The catalysed reaction is alpha-D-glucosamine 1-phosphate + acetyl-CoA = N-acetyl-alpha-D-glucosamine 1-phosphate + CoA + H(+). It catalyses the reaction N-acetyl-alpha-D-glucosamine 1-phosphate + UTP + H(+) = UDP-N-acetyl-alpha-D-glucosamine + diphosphate. The protein operates within nucleotide-sugar biosynthesis; UDP-N-acetyl-alpha-D-glucosamine biosynthesis; N-acetyl-alpha-D-glucosamine 1-phosphate from alpha-D-glucosamine 6-phosphate (route II): step 2/2. Its pathway is nucleotide-sugar biosynthesis; UDP-N-acetyl-alpha-D-glucosamine biosynthesis; UDP-N-acetyl-alpha-D-glucosamine from N-acetyl-alpha-D-glucosamine 1-phosphate: step 1/1. It participates in bacterial outer membrane biogenesis; LPS lipid A biosynthesis. Catalyzes the last two sequential reactions in the de novo biosynthetic pathway for UDP-N-acetylglucosamine (UDP-GlcNAc). The C-terminal domain catalyzes the transfer of acetyl group from acetyl coenzyme A to glucosamine-1-phosphate (GlcN-1-P) to produce N-acetylglucosamine-1-phosphate (GlcNAc-1-P), which is converted into UDP-GlcNAc by the transfer of uridine 5-monophosphate (from uridine 5-triphosphate), a reaction catalyzed by the N-terminal domain. This chain is Bifunctional protein GlmU, found in Histophilus somni (strain 129Pt) (Haemophilus somnus).